The chain runs to 349 residues: Ferredoxin--NADP reductase (349 aa).

Residues D43, Q51, Y56, V96, F131, D295, and S336 each coordinate FAD.

It belongs to the ferredoxin--NADP reductase type 2 family. In terms of assembly, homodimer. FAD is required as a cofactor.

It carries out the reaction 2 reduced [2Fe-2S]-[ferredoxin] + NADP(+) + H(+) = 2 oxidized [2Fe-2S]-[ferredoxin] + NADPH. This Paraburkholderia phytofirmans (strain DSM 17436 / LMG 22146 / PsJN) (Burkholderia phytofirmans) protein is Ferredoxin--NADP reductase.